The chain runs to 122 residues: Large ribosomal subunit protein uL14 (122 aa).

It belongs to the universal ribosomal protein uL14 family. In terms of assembly, part of the 50S ribosomal subunit. Forms a cluster with proteins L3 and L19. In the 70S ribosome, L14 and L19 interact and together make contacts with the 16S rRNA in bridges B5 and B8.

In terms of biological role, binds to 23S rRNA. Forms part of two intersubunit bridges in the 70S ribosome. This chain is Large ribosomal subunit protein uL14, found in Methylobacillus flagellatus (strain ATCC 51484 / DSM 6875 / VKM B-1610 / KT).